A 339-amino-acid chain; its full sequence is Phenylalanine--tRNA ligase alpha subunit (339 aa).

Glu-254 is a Mg(2+) binding site.

Belongs to the class-II aminoacyl-tRNA synthetase family. Phe-tRNA synthetase alpha subunit type 1 subfamily. Tetramer of two alpha and two beta subunits. Mg(2+) serves as cofactor.

Its subcellular location is the cytoplasm. It catalyses the reaction tRNA(Phe) + L-phenylalanine + ATP = L-phenylalanyl-tRNA(Phe) + AMP + diphosphate + H(+). The polypeptide is Phenylalanine--tRNA ligase alpha subunit (Acetivibrio thermocellus (strain ATCC 27405 / DSM 1237 / JCM 9322 / NBRC 103400 / NCIMB 10682 / NRRL B-4536 / VPI 7372) (Clostridium thermocellum)).